Consider the following 225-residue polypeptide: Holliday junction branch migration complex subunit RuvA (225 aa).

A domain I region spans residues 1–68 (MIGWLQGQKV…DDGSSLFGFP (68 aa)). The segment at 69–147 (ERRERDMFRT…EFSCRDPGMS (79 aa)) is domain II. The tract at residues 148–158 (LVDNGVIDSHQ) is flexible linker. Residues 159–225 (LKDSSLHELQ…SLRWLSQEAA (67 aa)) are domain III.

The protein belongs to the RuvA family. Homotetramer. Forms an RuvA(8)-RuvB(12)-Holliday junction (HJ) complex. HJ DNA is sandwiched between 2 RuvA tetramers; dsDNA enters through RuvA and exits via RuvB. An RuvB hexamer assembles on each DNA strand where it exits the tetramer. Each RuvB hexamer is contacted by two RuvA subunits (via domain III) on 2 adjacent RuvB subunits; this complex drives branch migration. In the full resolvosome a probable DNA-RuvA(4)-RuvB(12)-RuvC(2) complex forms which resolves the HJ.

It localises to the cytoplasm. In terms of biological role, the RuvA-RuvB-RuvC complex processes Holliday junction (HJ) DNA during genetic recombination and DNA repair, while the RuvA-RuvB complex plays an important role in the rescue of blocked DNA replication forks via replication fork reversal (RFR). RuvA specifically binds to HJ cruciform DNA, conferring on it an open structure. The RuvB hexamer acts as an ATP-dependent pump, pulling dsDNA into and through the RuvAB complex. HJ branch migration allows RuvC to scan DNA until it finds its consensus sequence, where it cleaves and resolves the cruciform DNA. This Prochlorococcus marinus (strain MIT 9313) protein is Holliday junction branch migration complex subunit RuvA.